Consider the following 395-residue polypeptide: Membrane glycoprotein spo14 (395 aa).

The Cytoplasmic segment spans residues 1-346 (MAELHLSFPA…KLEDAGVILR (346 aa)). WD repeat units lie at residues 250 to 285 (MIRDLKNAKGVTCFCCDKENGMIIVAGADCSIRFMS) and 290 to 326 (KLSQVYKHSLPVTDMQLSPDSEALVSVSADGLLCLQF). The chain crosses the membrane as a helical; Signal-anchor for type II membrane protein span at residues 347 to 367 (LSLMFPFVLAILYFYLQLLFP). The Lumenal portion of the chain corresponds to 368–395 (DEKLDAIHRFFSFILHIFSKYTIRNYDL).

It is found in the endoplasmic reticulum membrane. The protein resides in the golgi apparatus. Its subcellular location is the cis-Golgi network membrane. Its function is as follows. Required for the formation of transport vesicles from the ER. This function involves the cytoplasmic domain of the protein, which is thought to interact with the small GTP-binding protein sar1. This chain is Membrane glycoprotein spo14 (spo14), found in Schizosaccharomyces pombe (strain 972 / ATCC 24843) (Fission yeast).